A 65-amino-acid chain; its full sequence is Hainantoxin-X (65 aa).

A signal peptide spans 1-20 (MNMKILVLVAVLCLVVSTHA). The propeptide occupies 21–37 (ERHSKTDMEDSPMIQER). 3 disulfides stabilise this stretch: cysteine 39/cysteine 56, cysteine 46/cysteine 59, and cysteine 55/cysteine 64.

The protein belongs to the neurotoxin 36 family. 02 subfamily. As to expression, expressed by the venom gland.

The protein localises to the secreted. Reversibly blocks N-type calcium channels (Cav2.2/CACNA1B) in rat dorsal root ganglion cells. Elicits no toxic symptoms in either vertebrates or invertebrates during a period of 48 hours post-injection, when it was assayed in vivo by direct injection into mice and cockroaches. The chain is Hainantoxin-X from Cyriopagopus hainanus (Chinese bird spider).